The chain runs to 176 residues: Large ribosomal subunit protein uL10 (176 aa).

The protein belongs to the universal ribosomal protein uL10 family. Part of the ribosomal stalk of the 50S ribosomal subunit. The N-terminus interacts with L11 and the large rRNA to form the base of the stalk. The C-terminus forms an elongated spine to which L12 dimers bind in a sequential fashion forming a multimeric L10(L12)X complex.

Its function is as follows. Forms part of the ribosomal stalk, playing a central role in the interaction of the ribosome with GTP-bound translation factors. The polypeptide is Large ribosomal subunit protein uL10 (rplJ) (Streptomyces antibioticus).